An 833-amino-acid chain; its full sequence is Capsid-associated protein Vp91 (833 aa).

The first 18 residues, 1 to 18 (MSGVVLLVLAIILITIFS), serve as a signal peptide directing secretion. Residues N137, N180, N199, and N210 are each glycosylated (N-linked (GlcNAc...) asparagine; by host). The C2HC BV-type zinc-finger motif lies at 147-196 (CVPEDPCSGRPPGRYPMNELLLDTLVHNQHSDKNYSAGAHLYHPTLYLRC). 2 disulfides stabilise this stretch: C207-C220 and C260-C273. A Chitin-binding type-2 domain is found at 223-281 (NELCEGRPDGFVLPYFPEALLVNEFVECRNGEHVVAQCADGQVFDRALMTCVHAHPCAF). N-linked (GlcNAc...) asparagine; by host glycans are attached at residues N408, N413, N588, and N609. Residues 647 to 673 (EPGGDGDHWAPEVPPTQPEPELEPESE) are disordered.

It is found in the virion. Probable capsid-associated protein. The protein is Capsid-associated protein Vp91 of Choristoneura fumiferana nuclear polyhedrosis virus (CfMNPV).